Consider the following 756-residue polypeptide: Lysyl oxidase homolog 4 (756 aa).

An N-terminal signal peptide occupies residues 1–24 (MAWSPPATLFLFLLLLGQPPPSRP). SRCR domains lie at 32 to 133 (LRLV…VICH), 159 to 287 (VRLK…VSCV), 311 to 411 (VRLR…VRCN), and 421 to 529 (VRLA…VSCM). 17 cysteine pairs are disulfide-bonded: Cys-58–Cys-122, Cys-71–Cys-132, Cys-102–Cys-112, Cys-191–Cys-276, Cys-204–Cys-286, Cys-251–Cys-261, Cys-336–Cys-400, Cys-349–Cys-410, Cys-380–Cys-390, Cys-450–Cys-515, Cys-463–Cys-528, Cys-497–Cys-507, Cys-558–Cys-564, Cys-610–Cys-658, Cys-642–Cys-648, Cys-670–Cys-680, and Cys-717–Cys-731. N-linked (GlcNAc...) asparagine glycosylation occurs at Asn-198. Residues 533-736 (PDLVMNAQLV…WLHNCHTGNS (204 aa)) are lysyl-oxidase like. Cu cation contacts are provided by His-611, His-613, and His-615. Residue Asn-629 is glycosylated (N-linked (GlcNAc...) asparagine). A cross-link (lysine tyrosylquinone (Lys-Tyr)) is located at residues 638–674 (KASFCLEDTNCPTGLQRRYACANFGEQGVTVGCWDTY). Position 674 is a 2',4',5'-topaquinone (Tyr-674).

It belongs to the lysyl oxidase family. Cu cation serves as cofactor. The cofactor is lysine tyrosylquinone residue. The lysine tyrosylquinone cross-link (LTQ) is generated by condensation of the epsilon-amino group of a lysine with a topaquinone produced by oxidation of tyrosine. In terms of processing, may be proteolytically cleaved by BMP1. In terms of tissue distribution, expressed in many tissues, the highest levels among the tissues studied being in the skeletal muscle, testis and pancreas. Expressed in cartilage.

The protein resides in the secreted. It is found in the extracellular space. It carries out the reaction L-lysyl-[protein] + O2 + H2O = (S)-2-amino-6-oxohexanoyl-[protein] + H2O2 + NH4(+). Its activity is regulated as follows. Inhibited by beta-aminopropionitrile (BAPN). Functionally, catalyzes the oxidative deamination of lysine and hydroxylysine residues in collagen and elastin, resulting in the formation of covalent cross-linkages, and the stabilization of collagen and elastin fibers. The polypeptide is Lysyl oxidase homolog 4 (LOXL4) (Homo sapiens (Human)).